We begin with the raw amino-acid sequence, 822 residues long: Pentatricopeptide repeat-containing protein At2g18940, chloroplastic (822 aa).

The interval 1-42 is disordered; sequence MDGALFPHKPPYPIQSKRPPPSQSSNQSIKFSSATLHLPPPS. A chloroplast-targeting transit peptide spans 1–77; the sequence is MDGALFPHKP…SAAARFPSLE (77 aa). The segment covering 8-22 has biased composition (pro residues); the sequence is HKPPYPIQSKRPPPS. The span at 23 to 37 shows a compositional bias: low complexity; that stretch reads QSSNQSIKFSSATLH. 17 PPR repeats span residues 209-243, 244-279, 280-314, 315-349, 350-384, 385-419, 420-454, 455-489, 490-524, 525-559, 560-594, 595-629, 630-664, 665-699, 700-734, 735-769, and 770-800; these read DVRAYTTILHAYSRTGKYEKAIDLFERMKEMGPSP, TLVTYNVILDVFGKMGRSWRKILGVLDEMRSKGLKF, DEFTCSTVLSACAREGLLREAKEFFAELKSCGYEP, GTVTYNALLQVFGKAGVYTEALSVLKEMEENSCPA, DSVTYNELVAAYVRAGFSKEAAGVIEMMTKKGVMP, NAITYTTVIDAYGKAGKEDEALKLFYSMKEAGCVP, NTCTYNAVLSLLGKKSRSNEMIKMLCDMKSNGCSP, NRATWNTMLALCGNKGMDKFVNRVFREMKSCGFEP, DRDTFNTLISAYGRCGSEVDASKMYGEMTRAGFNA, CVTTYNALLNALARKGDWRSGENVISDMKSKGFKP, TETSYSLMLQCYAKGGNYLGIERIENRIKEGQIFP, SWMLLRTLLLANFKCRALAGSERAFTLFKKHGYKP, DMVIFNSMLSIFTRNNMYDQAEGILESIREDGLSP, DLVTYNSLMDMYVRRGECWKAEEILKTLEKSQLKP, DLVSYNTVIKGFCRRGLMQEAVRMLSEMTERGIRP, CIFTYNTFVSGYTAMGMFAEIEDVIECMAKNDCRP, and NELTFKMVVDGYCRAGKYSEAMDFVSKIKTF.

The protein belongs to the PPR family. P subfamily.

Its subcellular location is the plastid. It is found in the chloroplast. The polypeptide is Pentatricopeptide repeat-containing protein At2g18940, chloroplastic (Arabidopsis thaliana (Mouse-ear cress)).